The primary structure comprises 785 residues: uncharacterized protein (785 aa).

The region spanning 1–93 is the PE domain; sequence MSWVMVSPEL…GGAYAAAEAA (93 aa).

The protein belongs to the mycobacterial PE family. PGRS subfamily.

This is an uncharacterized protein from Mycobacterium tuberculosis (strain CDC 1551 / Oshkosh).